We begin with the raw amino-acid sequence, 166 residues long: Interferon gamma (166 aa).

The first 23 residues, 1–23 (MKYTSYFLALQLCLLLGFSGSYG), serve as a signal peptide directing secretion. A Pyrrolidone carboxylic acid modification is found at glutamine 24. N-linked (GlcNAc...) asparagine glycans are attached at residues asparagine 39 and asparagine 106.

The protein belongs to the type II (or gamma) interferon family. In terms of assembly, homodimer. Interacts with IFNGR1 (via extracellular domain); this interaction promotes IFNGR1 dimerization. Released primarily from activated T lymphocytes.

It is found in the secreted. Its function is as follows. Type II interferon produced by immune cells such as T-cells and NK cells that plays crucial roles in antimicrobial, antiviral, and antitumor responses by activating effector immune cells and enhancing antigen presentation. Primarily signals through the JAK-STAT pathway after interaction with its receptor IFNGR1 to affect gene regulation. Upon IFNG binding, IFNGR1 intracellular domain opens out to allow association of downstream signaling components JAK2, JAK1 and STAT1, leading to STAT1 activation, nuclear translocation and transcription of IFNG-regulated genes. Many of the induced genes are transcription factors such as IRF1 that are able to further drive regulation of a next wave of transcription. Plays a role in class I antigen presentation pathway by inducing a replacement of catalytic proteasome subunits with immunoproteasome subunits. In turn, increases the quantity, quality, and repertoire of peptides for class I MHC loading. Increases the efficiency of peptide generation also by inducing the expression of activator PA28 that associates with the proteasome and alters its proteolytic cleavage preference. Up-regulates as well MHC II complexes on the cell surface by promoting expression of several key molecules such as cathepsins B/CTSB, H/CTSH, and L/CTSL. Participates in the regulation of hematopoietic stem cells during development and under homeostatic conditions by affecting their development, quiescence, and differentiation. The sequence is that of Interferon gamma (IFNG) from Moschus berezovskii (Chinese forest musk deer).